The following is a 394-amino-acid chain: Flagellin B (394 aa).

The protein belongs to the bacterial flagellin family.

Its subcellular location is the secreted. The protein localises to the bacterial flagellum. In terms of biological role, flagellin is the subunit protein which polymerizes to form the filaments of bacterial flagella. In Rhizobium meliloti (strain 1021) (Ensifer meliloti), this protein is Flagellin B (flaB).